The primary structure comprises 328 residues: D-cysteine desulfhydrase (328 aa).

Lys51 is modified (N6-(pyridoxal phosphate)lysine).

The protein belongs to the ACC deaminase/D-cysteine desulfhydrase family. As to quaternary structure, homodimer. The cofactor is pyridoxal 5'-phosphate.

The enzyme catalyses D-cysteine + H2O = hydrogen sulfide + pyruvate + NH4(+) + H(+). Its function is as follows. Catalyzes the alpha,beta-elimination reaction of D-cysteine and of several D-cysteine derivatives. It could be a defense mechanism against D-cysteine. This is D-cysteine desulfhydrase from Salmonella typhi.